The following is a 97-amino-acid chain: Large ribosomal subunit protein uL23 (97 aa).

It belongs to the universal ribosomal protein uL23 family. In terms of assembly, part of the 50S ribosomal subunit. Contacts protein L29, and trigger factor when it is bound to the ribosome.

Functionally, one of the early assembly proteins it binds 23S rRNA. One of the proteins that surrounds the polypeptide exit tunnel on the outside of the ribosome. Forms the main docking site for trigger factor binding to the ribosome. The chain is Large ribosomal subunit protein uL23 from Marinobacter nauticus (strain ATCC 700491 / DSM 11845 / VT8) (Marinobacter aquaeolei).